The primary structure comprises 310 residues: Fatty acid elongase 1 (310 aa).

The Lumenal portion of the chain corresponds to 1–63 (MVSDWKNFCL…VGKQPLSEPR (63 aa)). A helical membrane pass occupies residues 64–84 (PVLLFIAMYYVVIFGGRSLVK). The Cytoplasmic portion of the chain corresponds to 85–100 (SCKPLKLRFISQVHNL). A helical membrane pass occupies residues 101–121 (MLTSVSFLWLILMVEQMLPIV). The Lumenal segment spans residues 122 to 141 (YRHGLYFAVCNVESWTQPME). The helical transmembrane segment at 142–163 (TLYYLNYMTKFVEFADTVLMVL) threads the bilayer. Residues 164-174 (KHRKLTFLHTY) lie on the Cytoplasmic side of the membrane. The HxxHH motif signature appears at 172–176 (HTYHH). A helical membrane pass occupies residues 175–196 (HHGATALLCYNQLVGYTAVTWV). Residues 197–201 (PVTLN) lie on the Lumenal side of the membrane. A helical transmembrane segment spans residues 202–223 (LAVHVLMYWYYFLSASGIRVWW). The Cytoplasmic segment spans residues 224-234 (KAWVTRLQIVQ). A helical transmembrane segment spans residues 235–255 (FMLDLIVVYYVLYQKIVAAYF). Residues 256–271 (KNACTPQCEDCLGSMT) lie on the Lumenal side of the membrane. Residues 272-292 (AIAAGAAILTSYLFLFISFYI) form a helical membrane-spanning segment. Over 293 to 310 (EVYKRGSASGKKKINKNN) the chain is Cytoplasmic. Residues 304 to 307 (KKIN) carry the Di-lysine motif motif.

It belongs to the ELO family.

The protein resides in the endoplasmic reticulum membrane. It catalyses the reaction a very-long-chain acyl-CoA + malonyl-CoA + H(+) = a very-long-chain 3-oxoacyl-CoA + CO2 + CoA. The enzyme catalyses tetradecanoyl-CoA + malonyl-CoA + H(+) = 3-oxohexadecanoyl-CoA + CO2 + CoA. The catalysed reaction is (9Z)-tetradecenoyl-CoA + malonyl-CoA + H(+) = 3-oxo-(11Z)-hexadecenoyl-CoA + CO2 + CoA. Functionally, component of a microsomal membrane bound medium-chain fatty acid elongation system, which extends medium-chain-length fatty acids to long-chain fatty acids. Component of elongase I, which extends 12-16-carbon fatty acyl-CoAs such as lauroyl-CoA to 14-18-carbon fatty acids by incorporation of malonyl-CoA. The chain is Fatty acid elongase 1 from Saccharomyces cerevisiae (strain ATCC 204508 / S288c) (Baker's yeast).